The primary structure comprises 366 residues: Flagellar P-ring protein (366 aa).

An N-terminal signal peptide occupies residues 1-27; it reads MKSKYSIFCMFLLRGFIFLGTVFSLNS.

This sequence belongs to the FlgI family. The basal body constitutes a major portion of the flagellar organelle and consists of four rings (L,P,S, and M) mounted on a central rod.

The protein resides in the periplasm. It is found in the bacterial flagellum basal body. Assembles around the rod to form the L-ring and probably protects the motor/basal body from shearing forces during rotation. The sequence is that of Flagellar P-ring protein from Leptospira interrogans serogroup Icterohaemorrhagiae serovar copenhageni (strain Fiocruz L1-130).